Reading from the N-terminus, the 502-residue chain is High affinity nitrate transporter 2.5 (502 aa).

Helical transmembrane passes span 51-71 (WFQFFCCFVSTFAAPPLLPVI), 87-107 (IASVSGAVFARIVMGTACDLF), 111-131 (LASAALTLSTAPAVYFTAGIK), 133-153 (PIGFIMVRFFAGFSLATFVST), 172-192 (IAAGWGNLGGGATQLIMPIVF), 208-228 (IAFFIPGLFQTLSAFAVLLFG), 264-284 (WITALAYGYCFGVELTIDNII), 300-320 (GIIAASFGLANFFARPGGGIF), 334-354 (LWAWWIVQTSGGVLCACLGQI), 361-381 (IIVMLVFSVFVQAACGLTFGV), 393-413 (VSGMTGAGGNVGAVLTQLIFF), and 423-443 (GITLMGVMSIACSLPICLIYF). A disordered region spans residues 477–502 (LHIGSQKFAETSISERGRATTTHPQT).

It belongs to the major facilitator superfamily. Nitrate/nitrite porter (TC 2.A.1.8) family. Oligomeric molecular complex with NRT3.1. As to expression, expressed in roots, shoots and seeds. Expressed in leaves. Expressed in root hair zone of the primary root and the lateral roots, but not in the lateral root tip or in older parts of the roots. Detected mainly in the epidermis and the cortex. Expressed in shoots only in higher-order veins.

It localises to the cell membrane. Nitrate transporter involved in the constitutive high-affinity transport system (cHATS) under long-term N starvation conditions. Predominantly expressed in roots of nitrate-deprived plants as a 150 kDa molecular complex with NRT3.1 representing the major contributor to cHATS influx. The principal role of this cHATS is to enable roots previously deprived of nitrate to absorb this ion and initiate induction of nitrate-inducible genes. Not involved in transfer of nitrate from roots to shoots. Contributes to phloem loading of nitrate in shoots during N starvation, but not required for growth and nitrate uptake in young plants. Required for the nitrate uptake-independent plant growth promotion and lateral root response to the rhizospheric Phyllobacterium. Might be involved in the transfer of nitrate from stored pools to cytoplasm. The chain is High affinity nitrate transporter 2.5 (NRT2.5) from Arabidopsis thaliana (Mouse-ear cress).